The following is a 1789-amino-acid chain: Mediator of RNA polymerase II transcription subunit 12 (1789 aa).

Disordered stretches follow at residues 1–138, 156–288, 1592–1656, and 1707–1727; these read MTSR…QRRG, SSPT…GSSA, IGTA…GWHA, and THLN…NPTR. 2 stretches are compositionally biased toward low complexity: residues 25-66 and 81-98; these read SQQR…QQQQ and TRNN…TLNN. Residues 107–124 are compositionally biased toward polar residues; that stretch reads QDPTSIVSPADPSGSSPA. The span at 220–229 shows a compositional bias: basic and acidic residues; the sequence is AVPDHSRREQ. Low complexity-rich tracts occupy residues 271 to 288, 1592 to 1628, 1647 to 1656, and 1707 to 1716; these read RSSA…GSSA, IGTA…SAVS, QQAQAQGWHA, and THLNLGNNSN.

The protein belongs to the Mediator complex subunit 12 family. Component of the srb8-11 complex, which itself associates with the Mediator complex.

Its subcellular location is the nucleus. Its function is as follows. Component of the srb8-11 complex. The srb8-11 complex is a regulatory module of the Mediator complex which is itself involved in regulation of basal and activated RNA polymerase II-dependent transcription. The srb8-11 complex may be involved in the transcriptional repression of a subset of genes regulated by Mediator. It may inhibit the association of the Mediator complex with RNA polymerase II to form the holoenzyme complex. The polypeptide is Mediator of RNA polymerase II transcription subunit 12 (srb8) (Neurospora crassa (strain ATCC 24698 / 74-OR23-1A / CBS 708.71 / DSM 1257 / FGSC 987)).